Here is a 364-residue protein sequence, read N- to C-terminus: Probable methyltransferase ICS2 (364 aa).

Tyr-18, Cys-61, Asp-98, Leu-99, Ser-133, and Phe-134 together coordinate S-adenosyl-L-homocysteine. Residues Asn-172, Asp-258, Phe-260, and Asn-261 each coordinate Mg(2+).

Belongs to the methyltransferase superfamily. Type-7 methyltransferase family. It depends on Mg(2+) as a cofactor.

No detectable N-methyltransferase activity. The chain is Probable methyltransferase ICS2 from Camellia irrawadiensis (Burmese tea).